A 340-amino-acid polypeptide reads, in one-letter code: Cathepsin B (340 aa).

A signal peptide spans 1–17 (MSWSRSILCLLGAFANA). Residues 18 to 79 (RSIPYYPPLS…ERVDFAEDMD (62 aa)) constitute a propeptide, activation peptide. N-linked (GlcNAc...) asparagine glycosylation is present at N38. 6 disulfides stabilise this stretch: C93-C122, C105-C150, C141-C208, C142-C146, C179-C212, and C187-C198. C108 is a catalytic residue. N192 is a glycosylation site (N-linked (GlcNAc...) asparagine). Residues H279 and N299 contribute to the active site.

It belongs to the peptidase C1 family. Dimer of a heavy chain and a light chain cross-linked by a disulfide bond.

The protein resides in the lysosome. It catalyses the reaction Hydrolysis of proteins with broad specificity for peptide bonds. Preferentially cleaves -Arg-Arg-|-Xaa bonds in small molecule substrates (thus differing from cathepsin L). In addition to being an endopeptidase, shows peptidyl-dipeptidase activity, liberating C-terminal dipeptides.. Its function is as follows. Thiol protease which is believed to participate in intracellular degradation and turnover of proteins. Has also been implicated in tumor invasion and metastasis. This chain is Cathepsin B (CTSB), found in Gallus gallus (Chicken).